Here is a 262-residue protein sequence, read N- to C-terminus: MSSIHSTAIVDPGAELDSSVTVGPYAVIGPKVRIGAGTSVGPHCVIEGRTTIGRDNRIFQFASLGAIPQDKKYAGEDTCLEIGDRNTIREFCTFNLGVPGAGGVTRVGDDNWIMAYCHIAHDCLVGNHTTLSNNTTLAGHVELGDWVTVGGLVGIHQFVKIGAHAMVGFASAVSQDVPPFMLVDGNPMGVRGFNIVGLKRRGFSADRLAAVKQMHRLLYRQGLTLEAAAKAIEELAAEHPEAAGDITLLRDFIVSSTRGIAR.

Belongs to the transferase hexapeptide repeat family. LpxA subfamily. Homotrimer.

It is found in the cytoplasm. The catalysed reaction is a (3R)-hydroxyacyl-[ACP] + UDP-N-acetyl-alpha-D-glucosamine = a UDP-3-O-[(3R)-3-hydroxyacyl]-N-acetyl-alpha-D-glucosamine + holo-[ACP]. Its pathway is glycolipid biosynthesis; lipid IV(A) biosynthesis; lipid IV(A) from (3R)-3-hydroxytetradecanoyl-[acyl-carrier-protein] and UDP-N-acetyl-alpha-D-glucosamine: step 1/6. Functionally, involved in the biosynthesis of lipid A, a phosphorylated glycolipid that anchors the lipopolysaccharide to the outer membrane of the cell. This is Acyl-[acyl-carrier-protein]--UDP-N-acetylglucosamine O-acyltransferase from Paracidovorax citrulli (strain AAC00-1) (Acidovorax citrulli).